Reading from the N-terminus, the 366-residue chain is tRNA/tmRNA (uracil-C(5))-methyltransferase (366 aa).

The S-adenosyl-L-methionine site is built by glutamine 190, tyrosine 218, asparagine 223, glutamate 239, and aspartate 299. Catalysis depends on cysteine 324, which acts as the Nucleophile. Glutamate 358 functions as the Proton acceptor in the catalytic mechanism.

It belongs to the class I-like SAM-binding methyltransferase superfamily. RNA M5U methyltransferase family. TrmA subfamily.

The enzyme catalyses uridine(54) in tRNA + S-adenosyl-L-methionine = 5-methyluridine(54) in tRNA + S-adenosyl-L-homocysteine + H(+). It catalyses the reaction uridine(341) in tmRNA + S-adenosyl-L-methionine = 5-methyluridine(341) in tmRNA + S-adenosyl-L-homocysteine + H(+). In terms of biological role, dual-specificity methyltransferase that catalyzes the formation of 5-methyluridine at position 54 (m5U54) in all tRNAs, and that of position 341 (m5U341) in tmRNA (transfer-mRNA). This chain is tRNA/tmRNA (uracil-C(5))-methyltransferase, found in Salmonella paratyphi B (strain ATCC BAA-1250 / SPB7).